Consider the following 282-residue polypeptide: 2-dehydro-3-deoxyphosphooctonate aldolase (282 aa).

It belongs to the KdsA family.

It is found in the cytoplasm. It carries out the reaction D-arabinose 5-phosphate + phosphoenolpyruvate + H2O = 3-deoxy-alpha-D-manno-2-octulosonate-8-phosphate + phosphate. It functions in the pathway carbohydrate biosynthesis; 3-deoxy-D-manno-octulosonate biosynthesis; 3-deoxy-D-manno-octulosonate from D-ribulose 5-phosphate: step 2/3. It participates in bacterial outer membrane biogenesis; lipopolysaccharide biosynthesis. In Bordetella avium (strain 197N), this protein is 2-dehydro-3-deoxyphosphooctonate aldolase.